The primary structure comprises 226 residues: Uracil-DNA glycosylase (226 aa).

Aspartate 64 serves as the catalytic Proton acceptor.

It belongs to the uracil-DNA glycosylase (UDG) superfamily. UNG family.

It localises to the cytoplasm. The catalysed reaction is Hydrolyzes single-stranded DNA or mismatched double-stranded DNA and polynucleotides, releasing free uracil.. Functionally, excises uracil residues from the DNA which can arise as a result of misincorporation of dUMP residues by DNA polymerase or due to deamination of cytosine. The polypeptide is Uracil-DNA glycosylase (Proteus mirabilis (strain HI4320)).